Here is an 88-residue protein sequence, read N- to C-terminus: DNA-directed RNA polymerase subunit omega (88 aa).

The protein belongs to the RNA polymerase subunit omega family. In terms of assembly, the RNAP catalytic core consists of 2 alpha, 1 beta, 1 beta' and 1 omega subunit. When a sigma factor is associated with the core the holoenzyme is formed, which can initiate transcription.

It carries out the reaction RNA(n) + a ribonucleoside 5'-triphosphate = RNA(n+1) + diphosphate. Its function is as follows. Promotes RNA polymerase assembly. Latches the N- and C-terminal regions of the beta' subunit thereby facilitating its interaction with the beta and alpha subunits. This is DNA-directed RNA polymerase subunit omega from Actinobacillus succinogenes (strain ATCC 55618 / DSM 22257 / CCUG 43843 / 130Z).